The sequence spans 98 residues: Citrate lyase acyl carrier protein (98 aa).

S14 bears the O-(phosphoribosyl dephospho-coenzyme A)serine mark.

This sequence belongs to the CitD family. In terms of assembly, oligomer with a subunit composition of (alpha,beta,gamma)6.

Its subcellular location is the cytoplasm. Functionally, covalent carrier of the coenzyme of citrate lyase. The polypeptide is Citrate lyase acyl carrier protein (Shigella boydii serotype 18 (strain CDC 3083-94 / BS512)).